Consider the following 418-residue polypeptide: uncharacterized protein (418 aa).

Disordered regions lie at residues 123–174 (KVKD…DSDK), 209–231 (FDKEEKEREKEKEKEKEKEEKEE), 258–302 (KDDN…DEEL), and 344–418 (KDAD…YFKK). A compositionally biased stretch (basic and acidic residues) spans 136 to 154 (NKKDKKDKNKQNEEDHLII). Positions 156 to 170 (DVIDEEIQEKEDNES) are enriched in acidic residues. The span at 209 to 227 (FDKEEKEREKEKEKEKEKE) shows a compositional bias: basic and acidic residues. The span at 266 to 293 (NQNQNQNQNNNNNNNNNNNNNNNNNNNN) shows a compositional bias: low complexity. Residues 344-356 (KDADDSDDFDEFN) are compositionally biased toward acidic residues. Residues 359 to 374 (DTESQLSKSKQKSPNV) show a composition bias toward polar residues. Positions 375 to 390 (KKTTTTTTTSTSTSSR) are enriched in low complexity. The span at 391–401 (KQSKSKLKPKS) shows a compositional bias: basic residues.

This is an uncharacterized protein from Dictyostelium discoideum (Social amoeba).